Here is a 526-residue protein sequence, read N- to C-terminus: Keratin, type I cytoskeletal 10 (526 aa).

Positions 1–16 (MSVRFSSNSRQYSSAR) are enriched in low complexity. The tract at residues 1-40 (MSVRFSSNSRQYSSARSGGGGGGGGGGSSIRVSSTKSSLG) is disordered. Residues 1 to 144 (MSVRFSSNSR…GDGGGLLSGN (144 aa)) form a head region. Serine 17, serine 38, serine 49, serine 52, and serine 169 each carry phosphoserine. Positions 17 to 28 (SGGGGGGGGGGS) are enriched in gly residues. Positions 145–180 (EKVTMQNLNDRLASYMNKVRDLEESNYELEGKIKEW) are coil 1A. The IF rod domain occupies 145–459 (EKVTMQNLND…SLLEGEGGYV (315 aa)). Residues 181–201 (YEKHGNSSQREPRDYSKYYKT) form a linker 1 region. The coil 1B stretch occupies residues 202-293 (IEDLKGQIVN…KNHEEEMKDL (92 aa)). Residues 294–316 (QNVSTGDVNVEMNAAPGVDLTQL) form a linker 12 region. Residues 317–455 (LNNMRNQYEQ…QTYRSLLEGE (139 aa)) form a coil 2 region. Residues 456 to 526 (GGYVGNLQIT…IESETKKHFY (71 aa)) are tail.

It belongs to the intermediate filament family. Heterotetramer of two type I and two type II keratins. Heterodimer with KRT1. Two heterodimers of KRT1 and KRT10 form a heterotetramer. The KRT10 subunit in the heterotetramer is probably disulfide-linked.

It is found in the secreted. The protein localises to the extracellular space. The protein resides in the cell surface. Its subcellular location is the cytoplasm. Functionally, plays a role in the establishment of the epidermal barrier on plantar skin. Involved in the maintenance of cell layer development and keratin filament bundles in suprabasal cells of the epithelium. The sequence is that of Keratin, type I cytoskeletal 10 from Rattus norvegicus (Rat).